The sequence spans 351 residues: Anthranilate phosphoribosyltransferase (351 aa).

5-phospho-alpha-D-ribose 1-diphosphate-binding positions include Gly80, 83-84, Thr88, 90-93, 108-116, and Ser120; these read GD, NIST, and KHGNRSVTS. An anthranilate-binding site is contributed by Gly80. A Mg(2+)-binding site is contributed by Ser92. Asn111 lines the anthranilate pocket. Residue Arg166 coordinates anthranilate. Mg(2+) is bound by residues Asp229 and Glu230.

It belongs to the anthranilate phosphoribosyltransferase family. As to quaternary structure, homodimer. Mg(2+) serves as cofactor.

It carries out the reaction N-(5-phospho-beta-D-ribosyl)anthranilate + diphosphate = 5-phospho-alpha-D-ribose 1-diphosphate + anthranilate. It functions in the pathway amino-acid biosynthesis; L-tryptophan biosynthesis; L-tryptophan from chorismate: step 2/5. Catalyzes the transfer of the phosphoribosyl group of 5-phosphorylribose-1-pyrophosphate (PRPP) to anthranilate to yield N-(5'-phosphoribosyl)-anthranilate (PRA). In Chlorobium chlorochromatii (strain CaD3), this protein is Anthranilate phosphoribosyltransferase.